The primary structure comprises 254 residues: Triosephosphate isomerase (254 aa).

12-14 is a substrate binding site; it reads NWK. The Electrophile role is filled by His99. The active-site Proton acceptor is Glu169. Substrate is bound by residues Gly175, Ser214, and 235-236; that span reads GG.

This sequence belongs to the triosephosphate isomerase family. Homodimer.

It localises to the cytoplasm. The catalysed reaction is D-glyceraldehyde 3-phosphate = dihydroxyacetone phosphate. The protein operates within carbohydrate biosynthesis; gluconeogenesis. Its pathway is carbohydrate degradation; glycolysis; D-glyceraldehyde 3-phosphate from glycerone phosphate: step 1/1. Involved in the gluconeogenesis. Catalyzes stereospecifically the conversion of dihydroxyacetone phosphate (DHAP) to D-glyceraldehyde-3-phosphate (G3P). The sequence is that of Triosephosphate isomerase from Bartonella henselae (strain ATCC 49882 / DSM 28221 / CCUG 30454 / Houston 1) (Rochalimaea henselae).